The primary structure comprises 427 residues: Glutamyl-tRNA(Gln) amidotransferase subunit D (427 aa).

The Asparaginase/glutaminase domain occupies 74 to 407 (ERVYIIGAGG…EVVRKMFQRN (334 aa)). Active-site residues include T84, T160, D161, and K240.

It belongs to the asparaginase 1 family. GatD subfamily. As to quaternary structure, heterodimer of GatD and GatE.

The enzyme catalyses L-glutamyl-tRNA(Gln) + L-glutamine + ATP + H2O = L-glutaminyl-tRNA(Gln) + L-glutamate + ADP + phosphate + H(+). Functionally, allows the formation of correctly charged Gln-tRNA(Gln) through the transamidation of misacylated Glu-tRNA(Gln) in organisms which lack glutaminyl-tRNA synthetase. The reaction takes place in the presence of glutamine and ATP through an activated gamma-phospho-Glu-tRNA(Gln). The GatDE system is specific for glutamate and does not act on aspartate. The sequence is that of Glutamyl-tRNA(Gln) amidotransferase subunit D from Aeropyrum pernix (strain ATCC 700893 / DSM 11879 / JCM 9820 / NBRC 100138 / K1).